We begin with the raw amino-acid sequence, 132 residues long: Translation initiation factor 5A (132 aa).

K36 carries the hypusine modification.

The protein belongs to the eIF-5A family.

It is found in the cytoplasm. Functions by promoting the formation of the first peptide bond. The protein is Translation initiation factor 5A (eIF5A) of Pyrobaculum arsenaticum (strain DSM 13514 / JCM 11321 / PZ6).